The following is a 227-amino-acid chain: Cytidylate kinase (227 aa).

An ATP-binding site is contributed by 12–20; that stretch reads GPSGAGKGT.

The protein belongs to the cytidylate kinase family. Type 1 subfamily.

Its subcellular location is the cytoplasm. The enzyme catalyses CMP + ATP = CDP + ADP. It carries out the reaction dCMP + ATP = dCDP + ADP. This Shigella sonnei (strain Ss046) protein is Cytidylate kinase.